The sequence spans 630 residues: Pentatricopeptide repeat-containing protein At1g26460, mitochondrial (630 aa).

A mitochondrion-targeting transit peptide spans 1 to 115 (MASHLFTRSR…RALSETLDMN (115 aa)). The disordered stretch occupies residues 42 to 79 (LLATESTDHDPSNHQSTSTPLPPNPATGSPLYQENWRS). Over residues 67–77 (ATGSPLYQENW) the composition is skewed to polar residues. 6 PPR repeats span residues 154–189 (DVNLYNHYLRANLMMGASAGDMLDLVAPMEEFSVEP), 190–224 (NTASYNLVLKAMYQARETEAAMKLLERMLLLGKDS), 227–261 (DDESYDLVIGMHFGVGKNDEAMKVMDTALKSGYML), 468–503 (SVAALNCIILGCANTWDLDRAYQTFEAISASFGLTP), 504–538 (NIDSYNALLYAFGKVKKTFEATNVFEHLVSIGVKP), and 539–573 (DSRTYSLLVDAHLINRDPKSALTVVDDMIKAGFEP).

It belongs to the PPR family. P subfamily.

The protein resides in the mitochondrion. This Arabidopsis thaliana (Mouse-ear cress) protein is Pentatricopeptide repeat-containing protein At1g26460, mitochondrial.